The chain runs to 125 residues: MVRESVLVMVGGALGSLARYWVGLGISQWAGAPPFLFGTLLVNLVGSFMLGGLFAWSVALRIDPALLLLAGTGFCGGFTTFSALSIECLVLLQKGDYPTAMGYLLGSLLGGLAAGWAGYLAAKAL.

4 helical membrane-spanning segments follow: residues 6–26 (VLVM…GLGI), 35–55 (FLFG…GLFA), 66–86 (LLLL…ALSI), and 100–120 (AMGY…AGYL). The Na(+) site is built by glycine 76 and threonine 79.

The protein belongs to the fluoride channel Fluc/FEX (TC 1.A.43) family.

It localises to the cell inner membrane. The enzyme catalyses fluoride(in) = fluoride(out). Na(+) is not transported, but it plays an essential structural role and its presence is essential for fluoride channel function. Its function is as follows. Fluoride-specific ion channel. Important for reducing fluoride concentration in the cell, thus reducing its toxicity. In Gloeobacter violaceus (strain ATCC 29082 / PCC 7421), this protein is Fluoride-specific ion channel FluC.